We begin with the raw amino-acid sequence, 260 residues long: HTH-type transcriptional repressor NanR (260 aa).

The tract at residues 1–20 (MNPFDSQSEDASDAIGRSLG) is disordered. The 69-residue stretch at 27 to 95 (KKLSEMVEEE…NGERARVSRP (69 aa)) folds into the HTH gntR-type domain. Residues 55–74 (ERELMAFFNVGRPSVREALA) constitute a DNA-binding region (H-T-H motif).

This sequence belongs to the NanR family.

Transcriptional repressor that controls expression of the genes required for the catabolism of sialic acids. The chain is HTH-type transcriptional repressor NanR from Cronobacter sakazakii (strain ATCC BAA-894) (Enterobacter sakazakii).